Here is a 296-residue protein sequence, read N- to C-terminus: MTDVSNIAPRDKAEILAQALPYIRKFHGKTMVIKYGGNAMTDPALQADFAEDVVLLKLVGINPVVVHGGGPQIEAALKRLGKKGEFIQGMRVTDAETMEIVEWVLGGEVQQDIVGLINQAGGKAVGLTGRDGGMIRAQKLKMRDNTDASKEYDVGQVGDIVSIDPSVVKALQDDAFIPVISPIGFGENNESYNINADVVAAKLATVLKAEKLMMLTNISGVLDKAGNLLTNLSARQIDDLFLDGTISGGMLPKISGALDAAKSGVNSVHIIDGRVPHVLLLEILTDQAFGTMIRSH.

Residues 69 to 70 (GG), R91, and N193 contribute to the substrate site.

Belongs to the acetylglutamate kinase family. ArgB subfamily.

The protein localises to the cytoplasm. The catalysed reaction is N-acetyl-L-glutamate + ATP = N-acetyl-L-glutamyl 5-phosphate + ADP. The protein operates within amino-acid biosynthesis; L-arginine biosynthesis; N(2)-acetyl-L-ornithine from L-glutamate: step 2/4. Functionally, catalyzes the ATP-dependent phosphorylation of N-acetyl-L-glutamate. The polypeptide is Acetylglutamate kinase (Albidiferax ferrireducens (strain ATCC BAA-621 / DSM 15236 / T118) (Rhodoferax ferrireducens)).